The chain runs to 321 residues: Phospho-N-acetylmuramoyl-pentapeptide-transferase (321 aa).

10 helical membrane passes run 1 to 21, 50 to 70, 76 to 96, 112 to 132, 140 to 160, 176 to 196, 200 to 220, 225 to 245, 250 to 270, and 300 to 320; these read MLFILAVIALLITFILVPILI, MGGLTFLISIIITSIIAIFFV, IILLLFVTIGFGLIGFIDDYI, FLAQIAIAVVFFLLSDVFHLV, IPFTNISIPLSFAYVIFIVFW, GLATGLSIIGFTMYAIMSFVL, AIGAFCIIMIFALLGFLPYNL, VFMGDTGSLALGGIFATISIM, LSLLLIGLVFVIETASVMLQV, and VVTVFWTAGLISGLIGLWIGV.

This sequence belongs to the glycosyltransferase 4 family. MraY subfamily. The cofactor is Mg(2+).

It localises to the cell membrane. The catalysed reaction is UDP-N-acetyl-alpha-D-muramoyl-L-alanyl-gamma-D-glutamyl-L-lysyl-D-alanyl-D-alanine + di-trans,octa-cis-undecaprenyl phosphate = Mur2Ac(oyl-L-Ala-gamma-D-Glu-L-Lys-D-Ala-D-Ala)-di-trans,octa-cis-undecaprenyl diphosphate + UMP. It functions in the pathway cell wall biogenesis; peptidoglycan biosynthesis. Catalyzes the initial step of the lipid cycle reactions in the biosynthesis of the cell wall peptidoglycan: transfers peptidoglycan precursor phospho-MurNAc-pentapeptide from UDP-MurNAc-pentapeptide onto the lipid carrier undecaprenyl phosphate, yielding undecaprenyl-pyrophosphoryl-MurNAc-pentapeptide, known as lipid I. This chain is Phospho-N-acetylmuramoyl-pentapeptide-transferase, found in Staphylococcus haemolyticus (strain JCSC1435).